We begin with the raw amino-acid sequence, 31 residues long: Photosystem II reaction center protein T (31 aa).

A helical membrane pass occupies residues 3-23; that stretch reads AIVYTFLLVGTLGIIFFAIFF.

It belongs to the PsbT family. PSII is composed of 1 copy each of membrane proteins PsbA, PsbB, PsbC, PsbD, PsbE, PsbF, PsbH, PsbI, PsbJ, PsbK, PsbL, PsbM, PsbT, PsbY, PsbZ, Psb30/Ycf12, at least 3 peripheral proteins of the oxygen-evolving complex and a large number of cofactors. It forms dimeric complexes.

Its subcellular location is the plastid. It is found in the chloroplast thylakoid membrane. Found at the monomer-monomer interface of the photosystem II (PS II) dimer, plays a role in assembly and dimerization of PSII. PSII is a light-driven water plastoquinone oxidoreductase, using light energy to abstract electrons from H(2)O, generating a proton gradient subsequently used for ATP formation. The chain is Photosystem II reaction center protein T from Ostreococcus tauri.